The chain runs to 196 residues: Holliday junction branch migration complex subunit RuvA (196 aa).

The interval 1–62 (MYEYINGLIT…ENDISLYGFI (62 aa)) is domain I. Positions 63–141 (DADEKALFNK…ELASKTGMVD (79 aa)) are domain II. Residues 142-148 (SSSNPEQ) form a flexible linker region. The interval 148–196 (QSQALDDALEALLALGYTAKDVKAVAQIIGRNSDTTDGYIRSALKLLVK) is domain III.

This sequence belongs to the RuvA family. As to quaternary structure, homotetramer. Forms an RuvA(8)-RuvB(12)-Holliday junction (HJ) complex. HJ DNA is sandwiched between 2 RuvA tetramers; dsDNA enters through RuvA and exits via RuvB. An RuvB hexamer assembles on each DNA strand where it exits the tetramer. Each RuvB hexamer is contacted by two RuvA subunits (via domain III) on 2 adjacent RuvB subunits; this complex drives branch migration. In the full resolvosome a probable DNA-RuvA(4)-RuvB(12)-RuvC(2) complex forms which resolves the HJ.

The protein resides in the cytoplasm. In terms of biological role, the RuvA-RuvB-RuvC complex processes Holliday junction (HJ) DNA during genetic recombination and DNA repair, while the RuvA-RuvB complex plays an important role in the rescue of blocked DNA replication forks via replication fork reversal (RFR). RuvA specifically binds to HJ cruciform DNA, conferring on it an open structure. The RuvB hexamer acts as an ATP-dependent pump, pulling dsDNA into and through the RuvAB complex. HJ branch migration allows RuvC to scan DNA until it finds its consensus sequence, where it cleaves and resolves the cruciform DNA. This Leuconostoc mesenteroides subsp. mesenteroides (strain ATCC 8293 / DSM 20343 / BCRC 11652 / CCM 1803 / JCM 6124 / NCDO 523 / NBRC 100496 / NCIMB 8023 / NCTC 12954 / NRRL B-1118 / 37Y) protein is Holliday junction branch migration complex subunit RuvA.